The primary structure comprises 631 residues: Putative meiotic phospholipase SPO1 (631 aa).

The first 17 residues, 1 to 17 (MQKLLFVFSVLLTVVLA), serve as a signal peptide directing secretion. A required for lipid-binding and function in meiosis region spans residues 24 to 67 (QCPSSPLIREAKHELCPEETLYLKKKKIKTKNKLIQFLKSLTEA). The region spanning 24 to 631 (QCPSSPLIRE…LQCFKDYCYS (608 aa)) is the PLA2c domain. N-linked (GlcNAc...) asparagine glycans are attached at residues N233, N293, and N303. A helical transmembrane segment spans residues 376–396 (FITATSSSIFNNVLIFIWNLA). N-linked (GlcNAc...) asparagine glycosylation is found at N500, N536, N560, N563, and N572.

The protein belongs to the lysophospholipase family. As to quaternary structure, interacts with SPO23. Post-translationally, glycosylated.

It localises to the endoplasmic reticulum membrane. The protein resides in the nucleus membrane. Functionally, regulates spindle pole duplication in meiosis I, but not in mitosis. Required for meiosis I, meiosis II chromosome segregation and spore formation. Binds phosphatidylinositol (4)P mono- and polyphosphates. This is Putative meiotic phospholipase SPO1 (SPO1) from Saccharomyces cerevisiae (strain ATCC 204508 / S288c) (Baker's yeast).